The sequence spans 359 residues: DNA-directed RNA polymerase RPB3-11 homolog (359 aa).

In the N-terminal section; belongs to the archaeal RpoD/eukaryotic RPB3 RNA polymerase subunit family. This sequence in the C-terminal section; belongs to the archaeal RpoL/eukaryotic RPB11/RPC19 RNA polymerase subunit family. In terms of assembly, part of the viral DNA-directed RNA polymerase that consists of 8 polII-like subunits (RPB1, RPB2, RPB3, RPB5, RPB6, RPB7, RPB9, RPB10), a capping enzyme and a termination factor.

The protein resides in the host cytoplasm. It localises to the virion. Its function is as follows. Component of the DNA-directed RNA polymerase (RNAP) that catalyzes the transcription in the cytoplasm of viral DNA into RNA using the four ribonucleoside triphosphates as substrates. This is DNA-directed RNA polymerase RPB3-11 homolog from Ornithodoros (relapsing fever ticks).